The primary structure comprises 324 residues: Myoblast determination protein 1 homolog (324 aa).

Residues 125–146 form a disordered region; it reads VDSQHEDTTTSTAGGAGVGGPR. Residues 155-206 enclose the bHLH domain; sequence DRRKAATMRERRRLRKVNEAFEVVKQRTCPNPNQRLPKVEILRSAIDYINNL. Residues 251-272 are disordered; that stretch reads YNPENMFDDDDLTDSDDDRDHH. The segment covering 256 to 267 has biased composition (acidic residues); sequence MFDDDDLTDSDD.

As to quaternary structure, efficient DNA binding requires dimerization with another bHLH protein. Body wall muscle cells; in clonal muscle precursors, in a set of early embryonic blastomeres (the ms-granddaughters), and in six glial-like cells called GLRS.

It localises to the nucleus. Its function is as follows. Involved in myogenesis, in cooperation with transcription factors unc-120 and hnd-1. Acts redundantly with fozi-1 to promote body wall muscle cell and coelomocyte specification in postembryonic mesoderm progenitors, probably through suppression of sem-2. The protein is Myoblast determination protein 1 homolog of Caenorhabditis elegans.